We begin with the raw amino-acid sequence, 202 residues long: Lipoprotein signal peptidase (202 aa).

The segment at 1–29 (MPDEPTGSADPLTSTEEAGGAGEPNAPAP) is disordered. 3 helical membrane passes run 35–55 (MLLS…VVAV), 88–108 (GYTW…FWMG), and 112–132 (VSPW…GNLV). Active-site residues include Asp-148 and Asp-162. Residues 160–180 (VADPSVVGGAILLVILSIFGF) traverse the membrane as a helical segment.

It belongs to the peptidase A8 family.

The protein resides in the cell membrane. The catalysed reaction is Release of signal peptides from bacterial membrane prolipoproteins. Hydrolyzes -Xaa-Yaa-Zaa-|-(S,diacylglyceryl)Cys-, in which Xaa is hydrophobic (preferably Leu), and Yaa (Ala or Ser) and Zaa (Gly or Ala) have small, neutral side chains.. Its pathway is protein modification; lipoprotein biosynthesis (signal peptide cleavage). In terms of biological role, this protein specifically catalyzes the removal of signal peptides from prolipoproteins. The sequence is that of Lipoprotein signal peptidase from Mycobacterium bovis (strain ATCC BAA-935 / AF2122/97).